A 512-amino-acid chain; its full sequence is Nephrocan (512 aa).

The N-terminal stretch at 1–19 (MHPLWAFLLGLSLTNGLSA) is a signal peptide. Residues 20–44 (NCPGRCSCDSMQSVQCYRLMELPSG) enclose the LRRNT domain. 17 LRR repeats span residues 45-69 (IPSTTKRLYISHSRIQHLQLSNFTG), 71-93 (LALEDFILLASGTESIENDTFKT), 94-117 (LSTLKTLELWKNKLRQVPSALPAN), 119-138 (EVLKLNDNAICALRGSEFEG), 139-162 (LKNLKVLELKNNLISSLSPSMLSP), 164-185 (ASLQSLMVDGNNIESVVGPLSL), 186-208 (PHLKYMSMENNQLHLIPGNVFTS), 210-232 (QNLQFLSFSGNFLTKIPINLPKS), 234-253 (LSLKMERNQLKVVRFRDMKH), 254-276 (LENLSHLYLSENFLSSIDGAQQL), 277-299 (TNLTTLEVSQNQLQMLPPRLPSR), 301-320 (QKLDCSSNFIQRVTAPEFQD), 321-344 (LRDLKHLFLDNNVVSLFEAGALQR), 346-371 (SQLSNLALEQNLLLSIPLRLPKTLAR), 373-389 (DLKGNAIQDMAERELRD), 390-413 (LKQLQVLNLRNNRISALDFKALEG), and 415-442 (PRLRHLYLDGNPWNCTCSLLRAREVLKA). N66 carries an N-linked (GlcNAc...) asparagine glycan. The segment covering 474-484 (EHHLQQSEKSK) has biased composition (basic and acidic residues). The segment at 474 to 512 (EHHLQQSEKSKETKKKPKPEDSSSIRLNMDDDDDDYEID) is disordered. Acidic residues predominate over residues 503–512 (DDDDDDYEID).

The protein belongs to the small leucine-rich proteoglycan (SLRP) family. In terms of processing, N-glycosylated. Expressed at highest levels in the kidney, where it is primarily detected in the epithelial cells of distal tubules and collecting ducts, and more weakly in proximal epithelial cells. Expressed at lower levels in heart and lung (at protein level). Detected in skeletal muscle.

It is found in the secreted. Its function is as follows. May inhibit TGF-beta signaling. This chain is Nephrocan, found in Mus musculus (Mouse).